The chain runs to 282 residues: tRNA pseudouridine synthase B (282 aa).

The Nucleophile role is filled by D39.

It belongs to the pseudouridine synthase TruB family. Type 1 subfamily.

The enzyme catalyses uridine(55) in tRNA = pseudouridine(55) in tRNA. In terms of biological role, responsible for synthesis of pseudouridine from uracil-55 in the psi GC loop of transfer RNAs. This is tRNA pseudouridine synthase B from Borreliella burgdorferi (strain ATCC 35210 / DSM 4680 / CIP 102532 / B31) (Borrelia burgdorferi).